The following is a 290-amino-acid chain: Pantothenate synthetase (290 aa).

30-37 (MGALHEGH) is an ATP binding site. Catalysis depends on His37, which acts as the Proton donor. Gln61 provides a ligand contact to (R)-pantoate. Gln61 is a beta-alanine binding site. Residue 147–150 (GEKD) participates in ATP binding. Residue Gln153 coordinates (R)-pantoate. ATP contacts are provided by residues Val176 and 184-187 (KSSR).

This sequence belongs to the pantothenate synthetase family. In terms of assembly, homodimer.

It is found in the cytoplasm. It catalyses the reaction (R)-pantoate + beta-alanine + ATP = (R)-pantothenate + AMP + diphosphate + H(+). The protein operates within cofactor biosynthesis; (R)-pantothenate biosynthesis; (R)-pantothenate from (R)-pantoate and beta-alanine: step 1/1. Its function is as follows. Catalyzes the condensation of pantoate with beta-alanine in an ATP-dependent reaction via a pantoyl-adenylate intermediate. This Chlorobium chlorochromatii (strain CaD3) protein is Pantothenate synthetase.